The sequence spans 344 residues: Bifunctional trans-3-hydroxy-L-proline dehydratase/2-epimerase (344 aa).

Ser90 acts as the Proton acceptor in catalysis. Substrate is bound by residues 91-92 (GS), Asp252, and 257-258 (GT).

The protein belongs to the proline racemase family.

It carries out the reaction trans-3-hydroxy-L-proline = 1-pyrroline-2-carboxylate + H2O. The enzyme catalyses trans-3-hydroxy-L-proline = cis-3-hydroxy-D-proline. Functionally, bifunctional enzyme catalyzing both the dehydration of trans-3-hydroxy-L-proline (t3LHyp) to Delta(1)-pyrroline-2-carboxylate (Pyr2C) and 2-epimerization of t3LHyp to cis-3-hydroxy-D-proline (c3DHyp). No dehydratase activity with L-proline, trans-4-hydroxy-L-proline (t4LHyp), cis-4-hydroxy-L-proline (c4LHyp), D-proline, cis-4-hydroxy-D-proline (c4DHyp), trans-4-hydroxy-D-proline (t4DHyp) or L-serine as substrates. Displays neither t4LHyp epimerase nor proline racemase activity. Is likely involved in a degradation pathway that converts t3LHyp to L-proline, which would allow P.aeruginosa to grow on t3LHyp as a sole carbon source. This Pseudomonas aeruginosa (strain ATCC 15692 / DSM 22644 / CIP 104116 / JCM 14847 / LMG 12228 / 1C / PRS 101 / PAO1) protein is Bifunctional trans-3-hydroxy-L-proline dehydratase/2-epimerase.